The sequence spans 390 residues: Probable galacturonosyltransferase-like 9 (390 aa).

Topologically, residues 1–10 are cytoplasmic; that stretch reads MRLRFPMKSA. The helical; Signal-anchor for type II membrane protein transmembrane segment at 11–31 threads the bilayer; it reads VLAFAIFLVFIPLFSVGIRMI. The Lumenal portion of the chain corresponds to 32–390; sequence PGRLTAVSAT…SELTEDSSFF (359 aa). 2 N-linked (GlcNAc...) asparagine glycosylation sites follow: asparagine 205 and asparagine 223.

The protein belongs to the glycosyltransferase 8 family.

Its subcellular location is the golgi apparatus membrane. It participates in glycan metabolism; pectin biosynthesis. Functionally, may be involved in pectin and/or xylans biosynthesis in cell walls. This chain is Probable galacturonosyltransferase-like 9 (GATL9), found in Arabidopsis thaliana (Mouse-ear cress).